The following is a 190-amino-acid chain: Mitochondrial inner membrane protease subunit 1 (190 aa).

Active-site residues include serine 40 and lysine 84.

The protein belongs to the peptidase S26 family. IMP1 subfamily. Component of the mitochondrial inner membrane peptidase (IMP) complex which at least consists of IMP1, IMP2 and SOM1.

The protein resides in the mitochondrion inner membrane. In terms of biological role, catalytic component of the mitochondrial inner membrane peptidase (IMP) complex. IMP catalyzes the removal of signal peptides required for the targeting of proteins from the mitochondrial matrix, across the inner membrane, into the inter-membrane space. The two catalytic IMP subunits seem to have non-overlapping substrate specificities. IMP1 substrates include nuclear encoded CYB2, mitochondrially encoded COX2, NADH-cytochrome b5 reductase and GUT2. This chain is Mitochondrial inner membrane protease subunit 1 (IMP1), found in Saccharomyces cerevisiae (strain ATCC 204508 / S288c) (Baker's yeast).